Reading from the N-terminus, the 349-residue chain is MSSLSGKVQTVLGPVEPSQLGRTLTHEHLTMAFDSFYCPPPPCQEAASREPIMMKNLFWIQKNPYSHQENLQLNQEVEAVREELLYFKAKGGGAVVENTTTGLSRDVRTLKWLAEQTGVHIIAGAGFYVDATHSAATRAMSVEQLTDVLISEILHGADGTSIKCGVIGEIGCSWPLTDSERKVLQATAHAQAQLGCPVIIHPGRNPGAPFQIIRVLQEAGADISKTVMSHLDRSIFDKKELLEFAQLGCYLEYDLFGTELLNYQLSPDIDMPDDNKRIRRVRFLVNEGYEDRILMAHDIHTKHRLMKYGGHGYSHILTNVVPKMLLRGLTERVLDKILRENPKQWLTFK.

A divalent metal cation contacts are provided by His26, His28, Glu169, His201, His230, and Asp298.

It belongs to the metallo-dependent hydrolases superfamily. Phosphotriesterase family. The cofactor is a divalent metal cation. As to expression, expressed primarily in proximal tubules of the kidney.

It is found in the cytoplasm. The protein resides in the cytosol. The catalysed reaction is N-acetyltaurine + H2O = taurine + acetate. It catalyses the reaction N-propanoyltaurine + H2O = propanoate + taurine. It carries out the reaction N-acetyl-L-methionine + H2O = L-methionine + acetate. The enzyme catalyses N-acetyl-L-isoleucine + H2O = L-isoleucine + acetate. The catalysed reaction is N-acetyl-L-leucine + H2O = L-leucine + acetate. It catalyses the reaction N-acetyl-L-valine + H2O = L-valine + acetate. Its function is as follows. N-acetyltaurine hydrolase that regulates feeding by catalyzing the hydrolysis of N-acetyltaurine into taurine and acetate. N-acetyltaurine has anorexigenic and anti-obesity effects that are dependent on GFRAL receptor and GDF15. PTER also acts on other N-acetyl amino acids (Met, Ile, Leu, Val) and N-propionyltaurine, but at lower rates. Binds resiniferotoxin, a vanilloid that desensitizes nociceptive neurons. This chain is N-acetyltaurine hydrolase, found in Rattus norvegicus (Rat).